Reading from the N-terminus, the 1113-residue chain is Antigenic protein P1 (1113 aa).

The helical transmembrane segment at 7–27 threads the bilayer; the sequence is IIAVVAIASAIVTGVVVIVVV. Residues N121, N207, N225, N233, N274, N533, N576, N622, N675, N679, N730, N753, N880, N899, N907, N972, and N995 are each glycosylated (N-linked (GlcNAc...) asparagine). Residues 159–473 enclose the Peptidase M60 domain; that stretch reads VFGQRAVAWA…SYVNMAHAFG (315 aa). A PA14 domain is found at 648–800; the sequence is LDPHQVEYEV…TEESSVDVSK (153 aa).

Its subcellular location is the membrane. This chain is Antigenic protein P1, found in Entamoeba histolytica (strain ATCC 30459 / HM-1:IMSS / ABRM).